Consider the following 411-residue polypeptide: POU domain, class 4, transcription factor 2 (411 aa).

The segment at 29–95 (LHSASPGSSA…SEAMRRACLP (67 aa)) is disordered. The segment covering 31–52 (SASPGSSAPAAPSASSPSSSSN) has biased composition (low complexity). 2 stretches are compositionally biased toward gly residues: residues 53 to 68 (AGGG…GGGR) and 76 to 86 (GSGGSGGGGGS). Residues 93–239 (CLPTPPSNIF…MHQAALSMAH (147 aa)) are required for transcriptional activation. The short motif at 112–121 (RAEALAAVDI) is the POU-IV box element. Residues 154-168 (SAASSSSVPISHPSA) show a composition bias toward low complexity. Residues 154–190 (SAASSSSVPISHPSALAGTHHHHHHHHHHHHQPHQAL) form a disordered region. Residues 172–186 (THHHHHHHHHHHHQP) are compositionally biased toward basic residues. The short motif at 173–187 (HHHHHHHHHHHHQPH) is the Nuclear speckle targeting signal element. The interval 240–411 (AHGLPSHMGC…QKRMKYSAGI (172 aa)) is required for DNA-binding and transcriptional repression. A POU-specific domain is found at 252 to 329 (DVDADPRDLE…ILQAWLEEAE (78 aa)). Positions 347-406 (KKRKRTSIAAPEKRSLEAYFAIQPRPSSEKIAAIAEKLDLKKNVVRVWFCNQRQKQKRMK) form a DNA-binding region, homeobox.

Belongs to the POU transcription factor family. Class-4 subfamily. As to quaternary structure, isoform 2: Interacts with POU4F1 isoform 1; this interaction inhibits both POU4F1 DNA-binding and transcriptional activities. Isoform 2: Interacts (C-terminus) with ESR1 (via DNA-binding domain); this interaction increases the estrogen receptor ESR1 transcriptional activity in a DNA- and ligand 17-beta-estradiol-independent manner. Isoform 2: Interacts (via C-terminus) with TP53 (via N-terminus). Interacts with DLX1 (via homeobox DNA-binding domain); this interaction suppresses DLX1-mediated transcriptional activity in postnatal retina enhancing retinal ganglion cell (RGC) differentiation. Interacts with DLX2 (via homeobox DNA-binding domain); this interaction enhances RGC differentiation. Isoform 1: Interacts (via C-terminus) with ISL1 (via C-terminus). Isoform 1: Interacts with ISL2. Isoform 1: Interacts with LHX2. In terms of tissue distribution, expressed in retinal ganglion cells (RGCs). Expressed in mature osteoclasts. Expressed in cells of layers of the superior colliculus and the adjacent periaqueductal gray (at protein level). Expressed in the brain, peripheral sensory nervous system and retina. Expressed in the optical, intermediate, and deep gray areas of the superior colliculus, the dorsal column of the mesencephalic and pontine central gray, and the lateral interpeduncular nucleus of the brain. Expressed predominantly in postmitotic, terminally differentiated neurons. Expressed in ganglion cell layer (GCL) of the retina.

Its subcellular location is the nucleus. It localises to the nucleus speckle. The protein resides in the cytoplasm. Functionally, tissue-specific DNA-binding transcription factor involved in the development and differentiation of target cells. Functions either as activator or repressor by modulating the rate of target gene transcription through RNA polymerase II enzyme in a promoter-dependent manner. Binds to the consensus octamer motif 5'-AT[A/T]A[T/A]T[A/T]A-3' of promoter of target genes. Plays a fundamental role in the gene regulatory network essential for retinal ganglion cell (RGC) differentiation. Binds to an octamer site to form a ternary complex with ISL1; cooperates positively with ISL1 and ISL2 to potentiate transcriptional activation of RGC target genes being involved in RGC fate commitment in the developing retina and RGC axon formation and pathfinding. Inhibits DLX1 and DLX2 transcriptional activities preventing DLX1- and DLX2-mediated ability to promote amacrine cell fate specification. In cooperation with TP53 potentiates transcriptional activation of BAX promoter activity increasing neuronal cell apoptosis. Negatively regulates BAX promoter activity in the absence of TP53. Acts as a transcriptional coactivator via its interaction with the transcription factor ESR1 by enhancing its effect on estrogen response element (ERE)-containing promoter. Antagonizes the transcriptional stimulatory activity of POU4F1 by preventing its binding to an octamer motif. Involved in TNFSF11-mediated terminal osteoclast differentiation. This chain is POU domain, class 4, transcription factor 2, found in Mus musculus (Mouse).